Consider the following 569-residue polypeptide: Cell death protein 4 (569 aa).

Positions 1-91 (MLCEIECRAL…HLKDFLDEYL (91 aa)) constitute a CARD domain. The 327-residue stretch at 116-442 (DRKLLLGNVP…IWSCVIPVDI (327 aa)) folds into the NB-ARC domain. Residues Phe-131, 162–167 (GSGKSV), and Gln-171 each bind ATP. Position 166 (Ser-166) interacts with Mg(2+).

In terms of assembly, associates as an asymmetric homodimer with ced-9. Upon release from ced-9, forms an octamer, known as the apoptosome, and interacts with ced-3; the interaction results in ced-3 autoproteolytic cleavage and activation. The octamer (a tetramer of an asymmetric dimer) also interacts with two processed ced-3 to form a stable holoenzyme. Interacts with sex-determining protein fem-1. May form a complex composed of ced-3, ced-4 and mac-1 or of ced-9, ced-4 and mac-1. Within the complex, interacts with ced-4.

The protein localises to the mitochondrion. Its subcellular location is the cytoplasm. It localises to the perinuclear region. In terms of biological role, plays a major role in programmed cell death (PCD, apoptosis). egl-1 binds to and directly inhibits the activity of ced-9, releasing the cell death activator ced-4 from a ced-9/ced-4 containing protein complex and allowing ced-4 to induce caspase ced-3 autoproteolytic cleavage and activation. Also forms a holoenzyme with processed ced-3 enhancing ced-3 activity. Component of the egl-1, ced-9, ced-4 and ced-3 apoptotic signaling cascade required for the initiation of programmed cell death in cells fated to die during embryonic and postembryonic development. During oogenesis, required for germline apoptosis downstream of ced-9 and upstream of ced-3 but independently of egl-1. May regulate germline apoptosis in response to DNA damage, probably downstream of let-60/ras and mpk-1 pathway. Regulates CEP neuron apoptosis in response to high Al(3+) levels. During male tail morphogenesis, promotes apoptosis of the tail-spike cell. During larval development, required for the elimination of transient presynaptic components downstream of egl-1 and ced-9 and upstream of ced-3 apoptotic pathway. Together with ain-1, a component of the miRNA-induced-silencing complex (miRISC), and probably upstream of ced-3, regulates temporal cell fate patterning during larval development. May play a role in resistance to S.typhimurium-mediated infection. The chain is Cell death protein 4 from Caenorhabditis briggsae.